A 487-amino-acid chain; its full sequence is Malonate-semialdehyde dehydrogenase 3 (487 aa).

NAD(+)-binding residues include Phe-154, Lys-178, Glu-181, Arg-182, and Ser-231. Residue Cys-286 is the Nucleophile of the active site. Glu-386 contacts NAD(+).

This sequence belongs to the aldehyde dehydrogenase family. IolA subfamily. As to quaternary structure, homotetramer.

The catalysed reaction is 3-oxopropanoate + NAD(+) + CoA + H2O = hydrogencarbonate + acetyl-CoA + NADH + H(+). It catalyses the reaction 2-methyl-3-oxopropanoate + NAD(+) + CoA + H2O = propanoyl-CoA + hydrogencarbonate + NADH + H(+). Its pathway is polyol metabolism; myo-inositol degradation into acetyl-CoA; acetyl-CoA from myo-inositol: step 7/7. In terms of biological role, catalyzes the oxidation of malonate semialdehyde (MSA) and methylmalonate semialdehyde (MMSA) into acetyl-CoA and propanoyl-CoA, respectively. Is involved in a myo-inositol catabolic pathway. Bicarbonate, and not CO2, is the end-product of the enzymatic reaction. The sequence is that of Malonate-semialdehyde dehydrogenase 3 from Bacillus cereus (strain ZK / E33L).